The sequence spans 33 residues: Neutrophil defensin 3 (33 aa).

Intrachain disulfides connect Cys-3–Cys-31, Cys-5–Cys-20, and Cys-10–Cys-30.

The protein belongs to the alpha-defensin family.

The protein resides in the secreted. In terms of biological role, anti-fungal and bactericidal activity, greater against Gram-positive bacteria. The sequence is that of Neutrophil defensin 3 from Mesocricetus auratus (Golden hamster).